The chain runs to 760 residues: Penicillin-binding protein 1B (760 aa).

Residues 1-8 lie on the Cytoplasmic side of the membrane; the sequence is MFFNFKKY. A helical; Signal-anchor for type II membrane protein membrane pass occupies residues 9–29; that stretch reads FLIKVFFFVLILTLCYGLYLY. The Extracellular segment spans residues 30 to 760; that stretch reads VKINRFINGK…NFLFWLKNLF (731 aa). Residues 136–308 are transglycosylase; sequence FRLEPKLIAM…SLYSPWTNPN (173 aa). E174 (proton donor; for transglycosylase activity) is an active-site residue. Positions 392 to 684 are transpeptidase; it reads EQAVKIEIPI…SSGAMQIYKR (293 aa). Catalysis depends on S451, which acts as the Acyl-ester intermediate; for transpeptidase activity.

It in the N-terminal section; belongs to the glycosyltransferase 51 family. The protein in the C-terminal section; belongs to the transpeptidase family.

The protein localises to the cell membrane. The enzyme catalyses [GlcNAc-(1-&gt;4)-Mur2Ac(oyl-L-Ala-gamma-D-Glu-L-Lys-D-Ala-D-Ala)](n)-di-trans,octa-cis-undecaprenyl diphosphate + beta-D-GlcNAc-(1-&gt;4)-Mur2Ac(oyl-L-Ala-gamma-D-Glu-L-Lys-D-Ala-D-Ala)-di-trans,octa-cis-undecaprenyl diphosphate = [GlcNAc-(1-&gt;4)-Mur2Ac(oyl-L-Ala-gamma-D-Glu-L-Lys-D-Ala-D-Ala)](n+1)-di-trans,octa-cis-undecaprenyl diphosphate + di-trans,octa-cis-undecaprenyl diphosphate + H(+). It catalyses the reaction Preferential cleavage: (Ac)2-L-Lys-D-Ala-|-D-Ala. Also transpeptidation of peptidyl-alanyl moieties that are N-acyl substituents of D-alanine.. It participates in cell wall biogenesis; peptidoglycan biosynthesis. Functionally, cell wall formation. Synthesis of cross-linked peptidoglycan from the lipid intermediates. The enzyme has a penicillin-insensitive transglycosylase N-terminal domain (formation of linear glycan strands) and a penicillin-sensitive transpeptidase C-terminal domain (cross-linking of the peptide subunits). This Buchnera aphidicola subsp. Acyrthosiphon pisum (strain APS) (Acyrthosiphon pisum symbiotic bacterium) protein is Penicillin-binding protein 1B (mrcB).